The primary structure comprises 385 residues: Methionine aminopeptidase 1 (385 aa).

A C6H2-type zinc finger spans residues 6–59 (TRVCETAGCSSEAKLQCPTCLKLGIQGSYFCSQECFKGSWATHKLLHKKAKDEK). Zn(2+) contacts are provided by cysteine 9, cysteine 14, cysteine 22, cysteine 25, cysteine 36, cysteine 40, histidine 48, and histidine 52. Histidine 203 provides a ligand contact to a protein. Residues aspartate 220, aspartate 231, and histidine 294 each coordinate Zn(2+). Position 301 (histidine 301) interacts with a protein. 2 residues coordinate Zn(2+): glutamate 327 and glutamate 358.

It belongs to the peptidase M24A family. Methionine aminopeptidase type 1 subfamily. Associates with the 60S ribosomal subunit of the 80S translational complex. Zn(2+) serves as cofactor. Requires Co(2+) as cofactor. It depends on Mn(2+) as a cofactor. Fe(2+) is required as a cofactor.

It localises to the cytoplasm. The catalysed reaction is Release of N-terminal amino acids, preferentially methionine, from peptides and arylamides.. Functionally, cotranslationally removes the N-terminal methionine from nascent proteins. The N-terminal methionine is often cleaved when the second residue in the primary sequence is small and uncharged (Met-Ala-, Cys, Gly, Pro, Ser, Thr, or Val). The sequence is that of Methionine aminopeptidase 1 (METAP1) from Gallus gallus (Chicken).